The chain runs to 194 residues: Calcium channel flower (194 aa).

Transmembrane regions (helical) follow at residues 34–54 (LLGI…VFSI), 59–79 (VSCL…MLLE), and 107–127 (GLYI…ASLF).

Belongs to the calcium channel flower family. As to quaternary structure, homomultimer. Associates with the dally/ magu complex.

The protein localises to the cell membrane. Its subcellular location is the cytoplasmic vesicle. It localises to the secretory vesicle. The protein resides in the synaptic vesicle membrane. It is found in the presynaptic cell membrane. The protein localises to the endosome. With respect to regulation, channel activity is inhibited by La(3+), which reduces Ca(2+) influx and thus inhibits it's function in promoting activity-dependent bulk endocytosis (ADBE) in response to high stimuli. Functionally, transmembrane protein which mediates synaptic endocytosis, fitness-based cell culling, neuronal culling, morphogen gradient scaling, and calcium transport. Regulates synaptic endocytosis and hence couples exo- with endocytosis. Controls two major modes of synaptic vesicle (SV) endocytosis in the synaptic boutons of neuromuscular junctions (NMJs); Ca(2+) channel-independent Clathrin-mediated endocytosis (CME) in response to mild stimulation, and Ca(2+) channel-dependent activity-dependent bulk endocytosis (ADBE) in response to strong stimulation. Functions in ADBE and subsequent SV reformation from bulk endosomes by initiating Ca(2+) channel-dependent phosphatidylinositol 4,5-bisphosphate (PtdIns(4,5)P2) compartmentalization in synaptic boutons. There it acts at the periactive zone to provide the low Ca(2+) levels required to initiate Calcineurin activation and upregulate PtdIns(4,5)P2. Conversely PtdIns(4,5)P2 enhances fwe Ca(2+) channel-activity, establishing a positive feedback loop that induces PtdIns(4,5)P2 microdomain at the periactive zone. These microdomains trigger bulk membrane invagination (i.e. ADBE) by triggering actin polymerization while also promoting localization of fwe to bulk endosomes, thereby removing the ADBE trigger to reduce endocytosis and prevent excess membrane uptake. PtdIns(4,5)P2 then promotes SV reformation from the bulk endosomes, to coordinate ADBE and subsequent SV reformation. Different combinations of the flower isoforms at the cell membrane are also required for the identification and elimination of suboptimal or supernumerary cells during development, regeneration, and adulthood. Required for the recognition and elimination of unfit cells in the developing wing during cell competition. In the developing pupal retina, mediates the elimination of unwanted postmitotic neurons, including supernumerary photoreceptor neurons that form at the periphery of the retina and are contained within incomplete ommatidia units. Also required for efficient elimination and replacement of old neurons by newly generated neurons during regeneration in the adult brain following mechanical injury. Downstream of the flower fitness fingerprints, cells identified as unwanted or unfit are eliminated via apoptosis through the expression of ahuizotl (azot). However, the cells marked for elimination by the flower isoforms only undergo apoptosis if additional thresholds are met; (1) their neighboring fit/healthy cells express different levels of the fwe isoforms, and (2) the levels of the protective signal SPARC expressed by the loser or unwanted cells are unable to inhibit caspase activation. These additional thresholds for flower-mediated apoptosis, allows useful cells to recover from transient and limited stress before they are unnecessarily eliminated. Functions with dally and magu in a mechanism of scaling, which utilises apoptosis to ensure that the dpp morphogen gradient, which mediates organ growth, remains proportional to the size of the growing wing. In this mechanism, fwe represses dally- and Magu-dependent activity in expanding the gradient, and dally/Magu inhibits fwe-dependent apoptosis to keep cell death rate low. When the levels of these different proteins are optimally regulated the gradient correctly scales with organ growth but when this fails, fwe-mediated apoptosis is activated to trim the developing tissue to match the correct size of the gradient. This chain is Calcium channel flower, found in Drosophila erecta (Fruit fly).